The sequence spans 154 residues: MAYAVVRVRGSVGVRGDIADTMKMLRLHRVNHCVIIPDTEHYTGMIKKVKDYVTYGEIDKDTLVALILKRGRLPGNKRLSEELVKELTELPVEELAEKVIAGEIKIKDTPIKPVFRLHPPRKGYDRAGVKKGFSIGGALGYRSGKINDLLNKMM.

It belongs to the universal ribosomal protein uL30 family. In terms of assembly, part of the 50S ribosomal subunit.

In Methanococcus maripaludis (strain DSM 14266 / JCM 13030 / NBRC 101832 / S2 / LL), this protein is Large ribosomal subunit protein uL30.